The following is a 225-amino-acid chain: Uridylate kinase (225 aa).

An ATP-binding site is contributed by 9 to 10 (GS). Glycine 46 contacts UMP. Glycine 47 and arginine 51 together coordinate ATP. Residues aspartate 67 and 115–121 (THPAHTT) each bind UMP. The ATP site is built by threonine 141, asparagine 142, tyrosine 147, and aspartate 150.

Belongs to the UMP kinase family. In terms of assembly, homohexamer.

It is found in the cytoplasm. The catalysed reaction is UMP + ATP = UDP + ADP. The protein operates within pyrimidine metabolism; CTP biosynthesis via de novo pathway; UDP from UMP (UMPK route): step 1/1. With respect to regulation, inhibited by UTP. Catalyzes the reversible phosphorylation of UMP to UDP. In Methanococcus maripaludis (strain C6 / ATCC BAA-1332), this protein is Uridylate kinase.